Consider the following 134-residue polypeptide: Prolactin (134 aa).

A disulfide bridge links C126 with C134.

It belongs to the somatotropin/prolactin family.

Its subcellular location is the secreted. This chain is Prolactin, found in Bufo japonicus (Japanese common toad).